A 445-amino-acid polypeptide reads, in one-letter code: Putrescine hydroxycinnamoyltransferase 1 (445 aa).

Residues histidine 154 and aspartate 388 each act as proton acceptor in the active site.

Belongs to the plant acyltransferase family. In terms of tissue distribution, expressed in leaves.

Functionally, hydroxycinnamoyl transferase that catalyzes the transfer of an acyl from p-coumaryol-CoA to putrescine, to produce coumaroyl putrescine. The chain is Putrescine hydroxycinnamoyltransferase 1 from Oryza sativa subsp. japonica (Rice).